Reading from the N-terminus, the 156-residue chain is Sec-independent protein translocase protein TatB (156 aa).

A helical membrane pass occupies residues 2-22 (FSSVGWGEIFLLVVVGLVVIG). Positions 100 to 156 (KIMAEGTEGEAQRNKQAADNNANVVERPADGSTARPTQNDPKDGPNYSGGVSWTDII) are disordered. Positions 113 to 122 (NKQAADNNAN) are enriched in polar residues.

The protein belongs to the TatB family. In terms of assembly, the Tat system comprises two distinct complexes: a TatABC complex, containing multiple copies of TatA, TatB and TatC subunits, and a separate TatA complex, containing only TatA subunits. Substrates initially bind to the TatABC complex, which probably triggers association of the separate TatA complex to form the active translocon.

The protein resides in the cell membrane. Functionally, part of the twin-arginine translocation (Tat) system that transports large folded proteins containing a characteristic twin-arginine motif in their signal peptide across membranes. Together with TatC, TatB is part of a receptor directly interacting with Tat signal peptides. TatB may form an oligomeric binding site that transiently accommodates folded Tat precursor proteins before their translocation. This Corynebacterium glutamicum (strain ATCC 13032 / DSM 20300 / JCM 1318 / BCRC 11384 / CCUG 27702 / LMG 3730 / NBRC 12168 / NCIMB 10025 / NRRL B-2784 / 534) protein is Sec-independent protein translocase protein TatB.